The sequence spans 268 residues: Glutamate racemase (268 aa).

Substrate-binding positions include 10-11 and 42-43; these read DS and YG. Catalysis depends on Cys73, which acts as the Proton donor/acceptor. Residue 74–75 coordinates substrate; it reads NT. Residue Cys184 is the Proton donor/acceptor of the active site. 185-186 is a substrate binding site; the sequence is TH.

Belongs to the aspartate/glutamate racemases family.

It carries out the reaction L-glutamate = D-glutamate. It participates in cell wall biogenesis; peptidoglycan biosynthesis. Functionally, provides the (R)-glutamate required for cell wall biosynthesis. The protein is Glutamate racemase of Limosilactobacillus fermentum (strain NBRC 3956 / LMG 18251) (Lactobacillus fermentum).